The following is a 357-amino-acid chain: DNA replication and repair protein RecF (357 aa).

30–37 (GANGSGKT) contributes to the ATP binding site.

The protein belongs to the RecF family.

It localises to the cytoplasm. Its function is as follows. The RecF protein is involved in DNA metabolism; it is required for DNA replication and normal SOS inducibility. RecF binds preferentially to single-stranded, linear DNA. It also seems to bind ATP. This Escherichia fergusonii (strain ATCC 35469 / DSM 13698 / CCUG 18766 / IAM 14443 / JCM 21226 / LMG 7866 / NBRC 102419 / NCTC 12128 / CDC 0568-73) protein is DNA replication and repair protein RecF.